Consider the following 350-residue polypeptide: Eukaryotic translation initiation factor 3 subunit I (350 aa).

WD repeat units lie at residues 8–49 (GHER…GTLE), 51–89 (HQGV…CVYT), 91–135 (NSPS…ASLT), 149–190 (QNGS…KSLQ), 198–240 (EKNV…KVYK), and 296–335 (GHFG…KDFL).

The protein belongs to the eIF-3 subunit I family. Component of the eukaryotic translation initiation factor 3 (eIF-3) complex.

The protein localises to the cytoplasm. Component of the eukaryotic translation initiation factor 3 (eIF-3) complex, which is involved in protein synthesis of a specialized repertoire of mRNAs and, together with other initiation factors, stimulates binding of mRNA and methionyl-tRNAi to the 40S ribosome. The eIF-3 complex specifically targets and initiates translation of a subset of mRNAs involved in cell proliferation. The polypeptide is Eukaryotic translation initiation factor 3 subunit I (Lodderomyces elongisporus (strain ATCC 11503 / CBS 2605 / JCM 1781 / NBRC 1676 / NRRL YB-4239) (Yeast)).